A 102-amino-acid polypeptide reads, in one-letter code: Small ribosomal subunit protein uS10 (102 aa).

This sequence belongs to the universal ribosomal protein uS10 family. As to quaternary structure, part of the 30S ribosomal subunit.

Involved in the binding of tRNA to the ribosomes. This is Small ribosomal subunit protein uS10 from Streptococcus thermophilus (strain CNRZ 1066).